Reading from the N-terminus, the 432-residue chain is Heme-based aerotactic transducer HemAT (432 aa).

Residues 184-420 (YNQTRDEQEE…EVSRAVSHVA (237 aa)) form the Methyl-accepting transducer domain.

The protein belongs to the methyl-accepting chemotaxis (MCP) protein family. As to quaternary structure, homotetramer.

Its function is as follows. Heme-containing signal transducer responsible for aerotaxis, the migratory response toward or away from oxygen. The chain is Heme-based aerotactic transducer HemAT (hemAT) from Bacillus subtilis (strain 168).